A 254-amino-acid polypeptide reads, in one-letter code: Gamma-glutamyl-gamma-aminobutyrate hydrolase PuuD (254 aa).

Positions 16-250 (RNRLKGHATQ…ITACQHHIAE (235 aa)) constitute a Glutamine amidotransferase type-1 domain. The active-site Nucleophile is the Cys-114. Active-site residues include His-222 and Glu-224.

It belongs to the peptidase C26 family. Homodimer.

It carries out the reaction 4-(gamma-L-glutamylamino)butanoate + H2O = 4-aminobutanoate + L-glutamate. It functions in the pathway amine and polyamine degradation; putrescine degradation; 4-aminobutanoate from putrescine: step 4/4. Involved in the breakdown of putrescine via hydrolysis of the gamma-glutamyl linkage of gamma-glutamyl-gamma-aminobutyrate. This is Gamma-glutamyl-gamma-aminobutyrate hydrolase PuuD (puuD) from Escherichia coli (strain K12).